Consider the following 310-residue polypeptide: Beta-ketoacyl-[acyl-carrier-protein] synthase III 1 (310 aa).

Active-site residues include C112 and H235. The tract at residues 236 to 240 (QANIR) is ACP-binding. N265 is an active-site residue.

It belongs to the thiolase-like superfamily. FabH family. Homodimer.

It localises to the cytoplasm. It catalyses the reaction malonyl-[ACP] + acetyl-CoA + H(+) = 3-oxobutanoyl-[ACP] + CO2 + CoA. The protein operates within lipid metabolism; fatty acid biosynthesis. Its function is as follows. Catalyzes the condensation reaction of fatty acid synthesis by the addition to an acyl acceptor of two carbons from malonyl-ACP. Catalyzes the first condensation reaction which initiates fatty acid synthesis and may therefore play a role in governing the total rate of fatty acid production. Possesses both acetoacetyl-ACP synthase and acetyl transacylase activities. Its substrate specificity determines the biosynthesis of branched-chain and/or straight-chain of fatty acids. This chain is Beta-ketoacyl-[acyl-carrier-protein] synthase III 1, found in Bacillus cereus (strain ATCC 14579 / DSM 31 / CCUG 7414 / JCM 2152 / NBRC 15305 / NCIMB 9373 / NCTC 2599 / NRRL B-3711).